The chain runs to 546 residues: 2-isopropylmalate synthase (546 aa).

The region spanning 8–271 (ILIFDTTLRD…NSFFGRSSDS (264 aa)) is the Pyruvate carboxyltransferase domain. 4 residues coordinate Mn(2+): aspartate 17, histidine 208, histidine 210, and asparagine 244. The segment at 408-546 (QLSHVQVSCG…KNKVLSNPKK (139 aa)) is regulatory domain.

This sequence belongs to the alpha-IPM synthase/homocitrate synthase family. LeuA type 1 subfamily. As to quaternary structure, homodimer. Requires Mn(2+) as cofactor.

It is found in the cytoplasm. It carries out the reaction 3-methyl-2-oxobutanoate + acetyl-CoA + H2O = (2S)-2-isopropylmalate + CoA + H(+). The protein operates within amino-acid biosynthesis; L-leucine biosynthesis; L-leucine from 3-methyl-2-oxobutanoate: step 1/4. In terms of biological role, catalyzes the condensation of the acetyl group of acetyl-CoA with 3-methyl-2-oxobutanoate (2-ketoisovalerate) to form 3-carboxy-3-hydroxy-4-methylpentanoate (2-isopropylmalate). The sequence is that of 2-isopropylmalate synthase from Prochlorococcus marinus subsp. pastoris (strain CCMP1986 / NIES-2087 / MED4).